Here is a 409-residue protein sequence, read N- to C-terminus: Peptidase T (409 aa).

Residue His-80 coordinates Zn(2+). The active site involves Asp-82. Asp-143 lines the Zn(2+) pocket. Glu-177 (proton acceptor) is an active-site residue. Zn(2+) contacts are provided by Glu-178, Asp-200, and His-382.

Belongs to the peptidase M20B family. Requires Zn(2+) as cofactor.

The protein resides in the cytoplasm. It carries out the reaction Release of the N-terminal residue from a tripeptide.. Its function is as follows. Cleaves the N-terminal amino acid of tripeptides. This Enterococcus faecalis (strain ATCC 700802 / V583) protein is Peptidase T.